The following is a 131-amino-acid chain: Large ribosomal subunit protein eL32 (131 aa).

It belongs to the eukaryotic ribosomal protein eL32 family.

In Eremothecium gossypii (strain ATCC 10895 / CBS 109.51 / FGSC 9923 / NRRL Y-1056) (Yeast), this protein is Large ribosomal subunit protein eL32 (RPL32).